The following is a 705-amino-acid chain: MADDIRILMCPPDHYDVDYVINPWMEGNIHKSSQERAVEQWKKLHQTIKECAIVDLVKPAKGWPDMVFTANAGLVLGENVVLSRFYHKERQGEEPYFKAWFEENGFTVYELPQDLPFEGAGDALFDREGRWLWAGYGFRSELDSHPYIAKWLDTEVVSLRLIDERFYHLDTCFCPLSGGYLLYYPPAFDAYSNRVIEMRIPPEKRIIVEELDAVNFACNAVNVNDIIIMNLVSRTLKEKLAEAGFKVRETPLTEFLKAGGAAKCLTLRVTEPILPDVHATVSIESRVIRMEGHLLDAGILNQALDLVVENSGSFRVLNFNLGVERNSTSSAEVRVSAPSHQIMEEIMTELIDLGAVPPPQELCDINTETVTQGGVAPDDFYVSTIYPTEVRVNCEWVQVTGQRMDAAIVVTSNPPSARCVLLRDLQVGDRVMVGVEGIRTIKKVESHEGGTRKENKEFAFMAAGVSSERRVELLVEQIAWEMRQIRDQGGKIVVTAGPVVIHTGGAQHLSHLVREGYVHALLGGNAIAVHDIEQATMGTSLGVDMQRGIPVRGGHRHHLKIINSVRRYGGIRQAVEAGFISKGVMYECVKNNIPYCLAGSIRDDGPLPDTEMNLVRAQSRYSELIQGADMILMLSSMLHSIGVGNMTPSGVKMVCVDINPAVVTKLSDRGSVESVGVVTDVGLFLSLLVRQLQQLTRPYSLAETL.

An arginine dihydrolase region spans residues 10–269 (CPPDHYDVDY…GAAKCLTLRV (260 aa)). Residues asparagine 22, asparagine 71, arginine 90, arginine 139, histidine 168, aspartate 170, alanine 258, and cysteine 264 each coordinate L-arginine. Residues asparagine 22, asparagine 71, arginine 90, arginine 139, and histidine 168 each contribute to the L-ornithine site. Residue histidine 168 is the Proton donor/acceptor of the active site. Residues alanine 258 and cysteine 264 each coordinate L-ornithine. Cysteine 264 functions as the Nucleophile in the catalytic mechanism. The ornithine cyclodeaminase stretch occupies residues 285 to 695 (SRVIRMEGHL…SLLVRQLQQL (411 aa)). Positions 525, 526, 604, 636, 637, 638, 639, 657, 680, and 681 each coordinate NAD(+).

This sequence in the N-terminal section; belongs to the DDAH family. In the C-terminal section; belongs to the AgrE/ArgZ ornithine cyclodeaminase family. Homotetramer. NAD(+) serves as cofactor.

It carries out the reaction L-arginine + 2 H2O + 2 H(+) = L-ornithine + 2 NH4(+) + CO2. The enzyme catalyses L-ornithine = L-proline + NH4(+). With respect to regulation, arginine dihydrolase activity does not require a metal cofactor. Bifunctional enzyme involved in a cyanobacterial arginine utilization pathway that enables cellular adaptation to nitrogen fluctuations. Catalyzes the hydrolysis of arginine to ornithine, with the release of ammonia and carbon dioxide. Then, probably catalyzes the conversion of ornithine to proline, with the release of ammonia. Is highly specific for arginine and cannot hydrolyze citrulline, dimethylarginine and other amino acids. This Synechocystis sp. (strain ATCC 27184 / PCC 6803 / Kazusa) protein is Bifunctional arginine dihydrolase/ornithine cyclodeaminase ArgZ.